The following is a 476-amino-acid chain: MAIKFLEVIKPFCAVLPEIQKPERRIQFKEKVLWTAITLFIFLVCCQIPLFGIMSSDSADPFYWMRVIMASNRGTLMELGISPIVTSGLIMQLLAGAKIIEVGDTPKDRALFNGAQKLFGMIITIGQAVVYVMTGMYGDPSEMGAGICLLIIIQLFVAGLIVLLLDELLQKGYGLGSGISLFIATNICETIVWKAFSPTTVNTGRGTEFEGAIIALFHLLATRTDKVRALREAFYRQNLPNLMNLIATIFVFAVVIYFQGFRVDLPIKSARYRGQYNTYPIKLFYTSNIPIILQSALVSNLYVISQMLSTRFSGNFLVNLLGTWSDTSTGGPARAYPVGGLCYYLSPPESFGTVLEDPIHAIIYIIFMLGSCAFFSKTWIEVSGSSAKDVAKQLKEQQMVMRGHRETSMVHELNRYIPTAAAFGGLCIGGLSVMADFLGAIGSGTGILLAVTIIYQYFEIFVKEQSEVGSVGALLF.

The Cytoplasmic segment spans residues 2 to 33; the sequence is AIKFLEVIKPFCAVLPEIQKPERRIQFKEKVL. A helical transmembrane segment spans residues 34–53; that stretch reads WTAITLFIFLVCCQIPLFGI. The Lumenal segment spans residues 54 to 76; the sequence is MSSDSADPFYWMRVIMASNRGTL. Residues 77–96 form a helical membrane-spanning segment; it reads MELGISPIVTSGLIMQLLAG. The Cytoplasmic portion of the chain corresponds to 97–117; it reads AKIIEVGDTPKDRALFNGAQK. A helical membrane pass occupies residues 118–138; that stretch reads LFGMIITIGQAVVYVMTGMYG. Residues 139–144 are Lumenal-facing; the sequence is DPSEMG. Residues 145 to 165 traverse the membrane as a helical segment; it reads AGICLLIIIQLFVAGLIVLLL. Residues 166 to 172 are Cytoplasmic-facing; the sequence is DELLQKG. The helical transmembrane segment at 173-193 threads the bilayer; it reads YGLGSGISLFIATNICETIVW. Residues 194-240 are Lumenal-facing; sequence KAFSPTTVNTGRGTEFEGAIIALFHLLATRTDKVRALREAFYRQNLP. The helical transmembrane segment at 241–261 threads the bilayer; that stretch reads NLMNLIATIFVFAVVIYFQGF. Over 262–288 the chain is Cytoplasmic; sequence RVDLPIKSARYRGQYNTYPIKLFYTSN. The helical transmembrane segment at 289 to 309 threads the bilayer; the sequence is IPIILQSALVSNLYVISQMLS. Residues 310-354 are Lumenal-facing; that stretch reads TRFSGNFLVNLLGTWSDTSTGGPARAYPVGGLCYYLSPPESFGTV. Residues 355–375 form a helical membrane-spanning segment; that stretch reads LEDPIHAIIYIIFMLGSCAFF. At 376–420 the chain is on the cytoplasmic side; that stretch reads SKTWIEVSGSSAKDVAKQLKEQQMVMRGHRETSMVHELNRYIPTA. The helical transmembrane segment at 421–441 threads the bilayer; that stretch reads AAFGGLCIGGLSVMADFLGAI. At 442 to 445 the chain is on the lumenal side; the sequence is GSGT. Residues 446–462 traverse the membrane as a helical segment; that stretch reads GILLAVTIIYQYFEIFV. Residues 463–476 are Cytoplasmic-facing; sequence KEQSEVGSVGALLF.

This sequence belongs to the SecY/SEC61-alpha family. In terms of assembly, the SEC61 channel-forming translocon complex consists of channel-forming core components SEC61A1, SEC61B and SEC61G and different auxiliary components such as SEC62 and SEC63.

The protein localises to the endoplasmic reticulum membrane. Component of SEC61 channel-forming translocon complex that mediates transport of signal peptide-containing precursor polypeptides across the endoplasmic reticulum (ER). Forms a ribosome receptor and a gated pore in the ER membrane, both functions required for cotranslational translocation of nascent polypeptides. This is Protein transport protein Sec61 subunit alpha-like 2 (sec61al2) from Danio rerio (Zebrafish).